Reading from the N-terminus, the 1447-residue chain is Gag-Pol polyprotein (1447 aa).

The N-myristoyl glycine; by host moiety is linked to residue G2. The interval 7-31 (VLSGGELDRWEKIRLRPGGKKKYKL) is interaction with Gp41. Residues 8-43 (LSGGELDRWEKIRLRPGGKKKYKLKHIVWASRELER) form an interaction with host CALM1 region. The interaction with host AP3D1 stretch occupies residues 12–19 (ELDRWEKI). The interval 14-33 (DRWEKIRLRPGGKKKYKLKH) is interaction with membrane phosphatidylinositol 4,5-bisphosphate and RNA. The short motif at 16–22 (WEKIRLR) is the Nuclear export signal element. The Nuclear localization signal motif lies at 26-32 (KKKYKLK). Residues 73–77 (EELRS) form an interaction with membrane phosphatidylinositol 4,5-bisphosphate region. Residues 106–128 (EEQNKSKKKAQQAAADTGHSSQV) are disordered. Y132 is subject to Phosphotyrosine; by host. An interaction with human PPIA/CYPA and NUP153 region spans residues 189 to 227 (NTVGGHQAAMQMLKETINEEAAEWDRVHPVHAGPIAPGQ). Residues 277–363 (YSPTSILDIR…GGPGHKARVL (87 aa)) form a dimerization/Multimerization of capsid protein p24 region. R387 is modified (asymmetric dimethylarginine; in Nucleocapsid protein p7; by host PRMT6). The segment at 390-407 (VKCFNCGKEGHTARNCRA) adopts a CCHC-type 1 zinc-finger fold. R409 carries the asymmetric dimethylarginine; in Nucleocapsid protein p7; by host PRMT6 modification. The segment at 411 to 428 (KGCWKCGKEGHQMKDCTE) adopts a CCHC-type 2 zinc-finger fold. Positions 446-493 (REFSSEQTRANSPTISSEQTRANSPTRRELQVWGRDNNSPSEAGADRQ) are disordered. The segment covering 450 to 470 (SEQTRANSPTISSEQTRANSP) has biased composition (polar residues). Positions 501–505 (PQITL) are dimerization of protease. The region spanning 520–589 (KEALLDTGAD…TPVNIIGRNL (70 aa)) is the Peptidase A2 domain. The active-site For protease activity; shared with dimeric partner is the D525. 2 dimerization of protease regions span residues 549 to 555 (GIGGFIK) and 588 to 600 (NLLT…LNFP). The 191-residue stretch at 643–833 (EGKISKIGPE…PPFLWMGYEL (191 aa)) folds into the Reverse transcriptase domain. D709, D784, and D785 together coordinate Mg(2+). The interval 826-834 (FLWMGYELH) is RT 'primer grip'. A Tryptophan repeat motif motif is present at residues 997–1013 (WETWWTEYWQATWIPEW). The 124-residue stretch at 1033–1156 (IVGAETFYVD…VDKLVSAGIR (124 aa)) folds into the RNase H type-1 domain. Residues D1042, E1077, D1097, and D1148 each coordinate Mg(2+). The segment at 1162–1203 (DGIDKAQDEHEKYHSNWRAMASDFNLPPVVAKEIVASCDKCQ) adopts an Integrase-type zinc-finger fold. 4 residues coordinate Zn(2+): H1171, H1175, C1199, and C1202. The region spanning 1213-1363 (VDCSPGIWQL…SAGERIVDII (151 aa)) is the Integrase catalytic domain. 3 residues coordinate Mg(2+): D1223, D1275, and E1311. Residues 1382–1429 (FRVYYRDSRNPLWKGPAKLLWKGEGAVVIQDNSDIKVVPRRKAKIIRD) constitute a DNA-binding region (integrase-type).

In terms of assembly, homotrimer; further assembles as hexamers of trimers. Interacts with gp41 (via C-terminus). Interacts with host CALM1; this interaction induces a conformational change in the Matrix protein, triggering exposure of the myristate group. Interacts with host AP3D1; this interaction allows the polyprotein trafficking to multivesicular bodies during virus assembly. Part of the pre-integration complex (PIC) which is composed of viral genome, matrix protein, Vpr and integrase. As to quaternary structure, homodimer; the homodimer further multimerizes as homohexamers or homopentamers. Interacts with human PPIA/CYPA; This interaction stabilizes the capsid. Interacts with human NUP153. Interacts with host PDZD8; this interaction stabilizes the capsid. Interacts with monkey TRIM5; this interaction destabilizes the capsid. Homodimer, whose active site consists of two apposed aspartic acid residues. In terms of assembly, heterodimer of p66 RT and p51 RT (RT p66/p51). Heterodimerization of RT is essential for DNA polymerase activity. The overall folding of the subdomains is similar in p66 RT and p51 RT but the spatial arrangements of the subdomains are dramatically different. As to quaternary structure, homotetramer; may further associate as a homohexadecamer. Part of the pre-integration complex (PIC) which is composed of viral genome, matrix protein, Vpr and integrase. Interacts with human SMARCB1/INI1 and human PSIP1/LEDGF isoform 1. Interacts with human KPNA3; this interaction might play a role in nuclear import of the pre-integration complex. Interacts with human NUP153; this interaction might play a role in nuclear import of the pre-integration complex. Mg(2+) serves as cofactor. In terms of processing, specific enzymatic cleavages by the viral protease yield mature proteins. The protease is released by autocatalytic cleavage. The polyprotein is cleaved during and after budding, this process is termed maturation. Proteolytic cleavage of p66 RT removes the RNase H domain to yield the p51 RT subunit. Nucleocapsid protein p7 might be further cleaved after virus entry. Post-translationally, tyrosine phosphorylated presumably in the virion by a host kinase. Phosphorylation is apparently not a major regulator of membrane association. Phosphorylated possibly by host MAPK1; this phosphorylation is necessary for Pin1-mediated virion uncoating. In terms of processing, methylated by host PRMT6, impairing its function by reducing RNA annealing and the initiation of reverse transcription.

The protein resides in the host cell membrane. Its subcellular location is the host endosome. The protein localises to the host multivesicular body. It localises to the virion membrane. It is found in the host nucleus. The protein resides in the host cytoplasm. Its subcellular location is the virion. It catalyses the reaction Specific for a P1 residue that is hydrophobic, and P1' variable, but often Pro.. The enzyme catalyses 3'-end directed exonucleolytic cleavage of viral RNA-DNA hybrid.. It carries out the reaction Endohydrolysis of RNA in RNA/DNA hybrids. Three different cleavage modes: 1. sequence-specific internal cleavage of RNA. Human immunodeficiency virus type 1 and Moloney murine leukemia virus enzymes prefer to cleave the RNA strand one nucleotide away from the RNA-DNA junction. 2. RNA 5'-end directed cleavage 13-19 nucleotides from the RNA end. 3. DNA 3'-end directed cleavage 15-20 nucleotides away from the primer terminus.. The catalysed reaction is DNA(n) + a 2'-deoxyribonucleoside 5'-triphosphate = DNA(n+1) + diphosphate. Protease: The viral protease is inhibited by many synthetic protease inhibitors (PIs), such as amprenavir, atazanavir, indinavir, loprinavir, nelfinavir, ritonavir and saquinavir. Use of protease inhibitors in tritherapy regimens permit more ambitious therapeutic strategies. Reverse transcriptase/ribonuclease H: RT can be inhibited either by nucleoside RT inhibitors (NRTIs) or by non nucleoside RT inhibitors (NNRTIs). NRTIs act as chain terminators, whereas NNRTIs inhibit DNA polymerization by binding a small hydrophobic pocket near the RT active site and inducing an allosteric change in this region. Classical NRTIs are abacavir, adefovir (PMEA), didanosine (ddI), lamivudine (3TC), stavudine (d4T), tenofovir (PMPA), zalcitabine (ddC), and zidovudine (AZT). Classical NNRTIs are atevirdine (BHAP U-87201E), delavirdine, efavirenz (DMP-266), emivirine (I-EBU), and nevirapine (BI-RG-587). The tritherapies used as a basic effective treatment of AIDS associate two NRTIs and one NNRTI. In terms of biological role, mediates, with Gag polyprotein, the essential events in virion assembly, including binding the plasma membrane, making the protein-protein interactions necessary to create spherical particles, recruiting the viral Env proteins, and packaging the genomic RNA via direct interactions with the RNA packaging sequence (Psi). Gag-Pol polyprotein may regulate its own translation, by the binding genomic RNA in the 5'-UTR. At low concentration, the polyprotein would promote translation, whereas at high concentration, the polyprotein would encapsidate genomic RNA and then shut off translation. Its function is as follows. Targets the polyprotein to the plasma membrane via a multipartite membrane-binding signal, that includes its myristoylated N-terminus. Matrix protein is part of the pre-integration complex. Implicated in the release from host cell mediated by Vpu. Binds to RNA. Forms the conical core that encapsulates the genomic RNA-nucleocapsid complex in the virion. Most core are conical, with only 7% tubular. The core is constituted by capsid protein hexamer subunits. The core is disassembled soon after virion entry. Host restriction factors such as TRIM5-alpha or TRIMCyp bind retroviral capsids and cause premature capsid disassembly, leading to blocks in reverse transcription. Capsid restriction by TRIM5 is one of the factors which restricts HIV-1 to the human species. Host PIN1 apparently facilitates the virion uncoating. On the other hand, interactions with PDZD8 or CYPA stabilize the capsid. Functionally, encapsulates and protects viral dimeric unspliced genomic RNA (gRNA). Binds these RNAs through its zinc fingers. Acts as a nucleic acid chaperone which is involved in rearangement of nucleic acid secondary structure during gRNA retrotranscription. Also facilitates template switch leading to recombination. As part of the polyprotein, participates in gRNA dimerization, packaging, tRNA incorporation and virion assembly. In terms of biological role, aspartyl protease that mediates proteolytic cleavages of Gag and Gag-Pol polyproteins during or shortly after the release of the virion from the plasma membrane. Cleavages take place as an ordered, step-wise cascade to yield mature proteins. This process is called maturation. Displays maximal activity during the budding process just prior to particle release from the cell. Also cleaves Nef and Vif, probably concomitantly with viral structural proteins on maturation of virus particles. Hydrolyzes host EIF4GI and PABP1 in order to shut off the capped cellular mRNA translation. The resulting inhibition of cellular protein synthesis serves to ensure maximal viral gene expression and to evade host immune response. Also mediates cleavage of host YTHDF3. Mediates cleavage of host CARD8, thereby activating the CARD8 inflammasome, leading to the clearance of latent HIV-1 in patient CD4(+) T-cells after viral reactivation; in contrast, HIV-1 can evade CARD8-sensing when its protease remains inactive in infected cells prior to viral budding. Its function is as follows. Multifunctional enzyme that converts the viral RNA genome into dsDNA in the cytoplasm, shortly after virus entry into the cell. This enzyme displays a DNA polymerase activity that can copy either DNA or RNA templates, and a ribonuclease H (RNase H) activity that cleaves the RNA strand of RNA-DNA heteroduplexes in a partially processive 3' to 5' endonucleasic mode. Conversion of viral genomic RNA into dsDNA requires many steps. A tRNA(3)-Lys binds to the primer-binding site (PBS) situated at the 5'-end of the viral RNA. RT uses the 3' end of the tRNA primer to perform a short round of RNA-dependent minus-strand DNA synthesis. The reading proceeds through the U5 region and ends after the repeated (R) region which is present at both ends of viral RNA. The portion of the RNA-DNA heteroduplex is digested by the RNase H, resulting in a ssDNA product attached to the tRNA primer. This ssDNA/tRNA hybridizes with the identical R region situated at the 3' end of viral RNA. This template exchange, known as minus-strand DNA strong stop transfer, can be either intra- or intermolecular. RT uses the 3' end of this newly synthesized short ssDNA to perform the RNA-dependent minus-strand DNA synthesis of the whole template. RNase H digests the RNA template except for two polypurine tracts (PPTs) situated at the 5'-end and near the center of the genome. It is not clear if both polymerase and RNase H activities are simultaneous. RNase H probably can proceed both in a polymerase-dependent (RNA cut into small fragments by the same RT performing DNA synthesis) and a polymerase-independent mode (cleavage of remaining RNA fragments by free RTs). Secondly, RT performs DNA-directed plus-strand DNA synthesis using the PPTs that have not been removed by RNase H as primers. PPTs and tRNA primers are then removed by RNase H. The 3' and 5' ssDNA PBS regions hybridize to form a circular dsDNA intermediate. Strand displacement synthesis by RT to the PBS and PPT ends produces a blunt ended, linear dsDNA copy of the viral genome that includes long terminal repeats (LTRs) at both ends. Catalyzes viral DNA integration into the host chromosome, by performing a series of DNA cutting and joining reactions. This enzyme activity takes place after virion entry into a cell and reverse transcription of the RNA genome in dsDNA. The first step in the integration process is 3' processing. This step requires a complex comprising the viral genome, matrix protein, Vpr and integrase. This complex is called the pre-integration complex (PIC). The integrase protein removes 2 nucleotides from each 3' end of the viral DNA, leaving recessed CA OH's at the 3' ends. In the second step, the PIC enters cell nucleus. This process is mediated through integrase and Vpr proteins, and allows the virus to infect a non dividing cell. This ability to enter the nucleus is specific of lentiviruses, other retroviruses cannot and rely on cell division to access cell chromosomes. In the third step, termed strand transfer, the integrase protein joins the previously processed 3' ends to the 5' ends of strands of target cellular DNA at the site of integration. The 5'-ends are produced by integrase-catalyzed staggered cuts, 5 bp apart. A Y-shaped, gapped, recombination intermediate results, with the 5'-ends of the viral DNA strands and the 3' ends of target DNA strands remaining unjoined, flanking a gap of 5 bp. The last step is viral DNA integration into host chromosome. This involves host DNA repair synthesis in which the 5 bp gaps between the unjoined strands are filled in and then ligated. Since this process occurs at both cuts flanking the HIV genome, a 5 bp duplication of host DNA is produced at the ends of HIV-1 integration. Alternatively, Integrase may catalyze the excision of viral DNA just after strand transfer, this is termed disintegration. This chain is Gag-Pol polyprotein (gag-pol), found in Human immunodeficiency virus type 1 group M subtype B (isolate BH10) (HIV-1).